Here is a 101-residue protein sequence, read N- to C-terminus: Protein translation factor SUI1 homolog (101 aa).

This sequence belongs to the SUI1 family.

The protein is Protein translation factor SUI1 homolog of Aeropyrum pernix (strain ATCC 700893 / DSM 11879 / JCM 9820 / NBRC 100138 / K1).